The following is a 223-amino-acid chain: ATP-dependent dethiobiotin synthetase BioD (223 aa).

T16 contacts Mg(2+). Residue K37 is part of the active site. S41 provides a ligand contact to substrate. 2 residues coordinate Mg(2+): D50 and E111. ATP-binding positions include D50, 111 to 114 (EGAG), 171 to 172 (NQ), 201 to 203 (AHV), and E208.

It belongs to the dethiobiotin synthetase family. In terms of assembly, homodimer. It depends on Mg(2+) as a cofactor.

The protein localises to the cytoplasm. The enzyme catalyses (7R,8S)-7,8-diammoniononanoate + CO2 + ATP = (4R,5S)-dethiobiotin + ADP + phosphate + 3 H(+). It functions in the pathway cofactor biosynthesis; biotin biosynthesis; biotin from 7,8-diaminononanoate: step 1/2. Functionally, catalyzes a mechanistically unusual reaction, the ATP-dependent insertion of CO2 between the N7 and N8 nitrogen atoms of 7,8-diaminopelargonic acid (DAPA, also called 7,8-diammoniononanoate) to form a ureido ring. This Anaeromyxobacter sp. (strain Fw109-5) protein is ATP-dependent dethiobiotin synthetase BioD.